Reading from the N-terminus, the 128-residue chain is Ribosome-binding factor A (128 aa).

The protein belongs to the RbfA family. Monomer. Binds 30S ribosomal subunits, but not 50S ribosomal subunits or 70S ribosomes.

Its subcellular location is the cytoplasm. In terms of biological role, one of several proteins that assist in the late maturation steps of the functional core of the 30S ribosomal subunit. Associates with free 30S ribosomal subunits (but not with 30S subunits that are part of 70S ribosomes or polysomes). Required for efficient processing of 16S rRNA. May interact with the 5'-terminal helix region of 16S rRNA. This Idiomarina loihiensis (strain ATCC BAA-735 / DSM 15497 / L2-TR) protein is Ribosome-binding factor A.